Reading from the N-terminus, the 144-residue chain is Grifin (144 aa).

The region spanning 5–133 (FEAFCAGGLA…DHQLAQVELA (129 aa)) is the Galectin domain. The residue at position 138 (serine 138) is a Phosphoserine.

As to quaternary structure, homodimer. In terms of tissue distribution, lens-specific. Located at the interface between lens fiber cells (at protein level).

The chain is Grifin (Grifin) from Rattus norvegicus (Rat).